We begin with the raw amino-acid sequence, 2067 residues long: Dedicator of cytokinesis protein 11 (2067 aa).

The 108-residue stretch at 162 to 269 (GVMKQGWLQK…WVNTIKQALL (108 aa)) folds into the PH domain. The disordered stretch occupies residues 274–302 (DRRNGSETSEGSLDDDSSSQGKPESITES). Positions 291 to 302 (SSQGKPESITES) are enriched in polar residues. A C2 DOCK-type domain is found at 643 to 820 (NNHLYIYPQQ…PLFKVRAYVA (178 aa)). Positions 1224 to 1267 (SSTIVDKEPSGSVTQNGLSRRGESRGSMYGDPGTPDINELHRRG) are disordered. The region spanning 1614 to 2040 (RSYASTPELR…LSEIIHEQIF (427 aa)) is the DOCKER domain.

It belongs to the DOCK family.

Guanine nucleotide-exchange factor (GEF) that activates CDC42 by exchanging bound GDP for free GTP. The polypeptide is Dedicator of cytokinesis protein 11 (Danio rerio (Zebrafish)).